The sequence spans 348 residues: Sex-lethal homolog (348 aa).

2 RRM domains span residues 110-188 (TNLI…YARP) and 196-276 (TNLY…LAEE). Residues 296 to 310 (GGGGGGGGGGGGGMG) are compositionally biased toward gly residues. The interval 296–317 (GGGGGGGGGGGGGMGGPPPPPM) is disordered.

Its subcellular location is the nucleus. Its function is as follows. Unknown; apparently not involved in somatic sex determination. The protein is Sex-lethal homolog (SXL) of Ceratitis capitata (Mediterranean fruit fly).